Consider the following 154-residue polypeptide: NADPH-dependent 7-cyano-7-deazaguanine reductase (154 aa).

C52 functions as the Thioimide intermediate in the catalytic mechanism. The active-site Proton donor is D59. Residues 74–76 and 93–94 each bind substrate; these read VES and HE.

This sequence belongs to the GTP cyclohydrolase I family. QueF type 1 subfamily.

The protein resides in the cytoplasm. It carries out the reaction 7-aminomethyl-7-carbaguanine + 2 NADP(+) = 7-cyano-7-deazaguanine + 2 NADPH + 3 H(+). It functions in the pathway tRNA modification; tRNA-queuosine biosynthesis. In terms of biological role, catalyzes the NADPH-dependent reduction of 7-cyano-7-deazaguanine (preQ0) to 7-aminomethyl-7-deazaguanine (preQ1). This Sinorhizobium medicae (strain WSM419) (Ensifer medicae) protein is NADPH-dependent 7-cyano-7-deazaguanine reductase.